Consider the following 185-residue polypeptide: Ribosome-recycling factor (185 aa).

It belongs to the RRF family.

It is found in the cytoplasm. In terms of biological role, responsible for the release of ribosomes from messenger RNA at the termination of protein biosynthesis. May increase the efficiency of translation by recycling ribosomes from one round of translation to another. This Beutenbergia cavernae (strain ATCC BAA-8 / DSM 12333 / CCUG 43141 / JCM 11478 / NBRC 16432 / NCIMB 13614 / HKI 0122) protein is Ribosome-recycling factor.